A 430-amino-acid chain; its full sequence is Serine--tRNA ligase (430 aa).

237–239 (TAE) is a binding site for L-serine. Residue 268-270 (RSE) coordinates ATP. An L-serine-binding site is contributed by Glu-291. ATP is bound at residue 355 to 358 (EISS). Ser-391 serves as a coordination point for L-serine.

This sequence belongs to the class-II aminoacyl-tRNA synthetase family. Type-1 seryl-tRNA synthetase subfamily. Homodimer. The tRNA molecule binds across the dimer.

It is found in the cytoplasm. The enzyme catalyses tRNA(Ser) + L-serine + ATP = L-seryl-tRNA(Ser) + AMP + diphosphate + H(+). It carries out the reaction tRNA(Sec) + L-serine + ATP = L-seryl-tRNA(Sec) + AMP + diphosphate + H(+). It functions in the pathway aminoacyl-tRNA biosynthesis; selenocysteinyl-tRNA(Sec) biosynthesis; L-seryl-tRNA(Sec) from L-serine and tRNA(Sec): step 1/1. Its function is as follows. Catalyzes the attachment of serine to tRNA(Ser). Is also able to aminoacylate tRNA(Sec) with serine, to form the misacylated tRNA L-seryl-tRNA(Sec), which will be further converted into selenocysteinyl-tRNA(Sec). The protein is Serine--tRNA ligase of Enterobacter sp. (strain 638).